The sequence spans 236 residues: 7-cyano-7-deazaguanine synthase (236 aa).

7 to 17 (CSGGLDSVSLA) provides a ligand contact to ATP. 4 residues coordinate Zn(2+): Cys-185, Cys-193, Cys-196, and Cys-199.

This sequence belongs to the QueC family. The cofactor is Zn(2+).

It catalyses the reaction 7-carboxy-7-deazaguanine + NH4(+) + ATP = 7-cyano-7-deazaguanine + ADP + phosphate + H2O + H(+). The protein operates within purine metabolism; 7-cyano-7-deazaguanine biosynthesis. Catalyzes the ATP-dependent conversion of 7-carboxy-7-deazaguanine (CDG) to 7-cyano-7-deazaguanine (preQ(0)). This Rhizobium rhizogenes (strain K84 / ATCC BAA-868) (Agrobacterium radiobacter) protein is 7-cyano-7-deazaguanine synthase.